Reading from the N-terminus, the 514-residue chain is Putative selenium-binding protein (514 aa).

This sequence belongs to the selenium-binding protein family.

This Caenorhabditis briggsae protein is Putative selenium-binding protein.